Here is a 276-residue protein sequence, read N- to C-terminus: MGRSRSRSSSRSKHTKSSKHNKKNRSRSRSRSREKERARKRSKSRESKRNRRRESRSRSRSNTAPSSRRDRERERERASSPPDRIDIFGRTVSKRSSLDEKQKREEEEKKAEFERQRKIRQQEIEEKLIEEETARRVEELVAKRVEEELEKRKDEIEREVLRRVEEAKRIMEKQLLEELERQRQAELAAQKAREEEERAKREELERILEENNRKIAEAQAKLAEEQLKIVEEQRKIHEERMKLEQERQRQQKEEQKIILGKGKSRPKLSFSLKSQD.

2 stretches are compositionally biased toward basic residues: residues 1–30 (MGRS…RSRS) and 38–59 (ARKR…RSRS). The segment at 1-77 (MGRSRSRSSS…RRDRERERER (77 aa)) is necessary and sufficient for RNA binding. A disordered region spans residues 1–117 (MGRSRSRSSS…EKKAEFERQR (117 aa)). Basic and acidic residues-rich tracts occupy residues 67–87 (SRRD…RIDI) and 96–117 (SSLD…ERQR). The necessary and sufficient for transcriptional regulation stretch occupies residues 78–276 (ASSPPDRIDI…KLSFSLKSQD (199 aa)). Positions 175–179 (LLEEL) match the LXXLL motif 1; degenerate motif. The LXXLL motif 2; degenerate motif lies at 204–208 (LERIL). The segment covering 240–256 (RMKLEQERQRQQKEEQK) has biased composition (basic and acidic residues). The segment at 240 to 276 (RMKLEQERQRQQKEEQKIILGKGKSRPKLSFSLKSQD) is disordered.

This sequence belongs to the ARGLU1 family.

It localises to the nucleus. The protein resides in the nucleus speckle. Its subcellular location is the chromosome. Functionally, dual function regulator of gene expression; regulator of transcription and modulator of alternative splicing. General coactivator of nuclear receptor-induced gene expression. This is Arginine and glutamate-rich protein 1 (ARGLU1) from Gallus gallus (Chicken).